Consider the following 68-residue polypeptide: uncharacterized protein (68 aa).

The segment at 1 to 27 (MNEFEKWIEGRYEPHEQKQKEHEDTMG) is disordered.

This is an uncharacterized protein from Bacillus subtilis (strain 168).